The sequence spans 810 residues: MASVPTQRDEKEKKNDELATAILKDKKRPNRLIIDQSDNDDNSMVMLSQAKMDELGLFRGDSVILKGKKRRETVSIVLNADNCPNDKIKMNKVVRNNLRSRLGDVVSISSAQLEYGKRVHVLPIDDTIEGLTGNLFDVFLRPYFTDAYRPVHKGDIFTVQAAMRTVEFKVVETDPAPACIVAPDTVIHYEGDPIKREEEEEALNEVGYDDLGGVRKQLAQIKEMVELPLRHPQLFKAIGVKPPRGILLFGPPGTGKTLIARAVANETGAFFFLINGPEIMSKMSGESESNLRKAFAECEKNSPAILFIDEIDAIAPKREKAHGEVEKRIVSQLLTLMDGLKTRAHVVVIAATNRPNSIDGALRRFGRFDREIDIGIPDAVGRLEILRIHTKNMKLGEDVDLEQVANECHGFVGADLASLCSEAAIQQIREKMELIDLEDDTIDAEVLNSLAVTMENFRFAMGKSSPSALREAVVETPNTTWSDIGGLQNVKRELQELVQYPVEHPEKYLKFGMQPSRGVLFYGPPGCGKTLLAKAIANECQANFISIKGPELLTMWFGESEANVRDVFDKARAAAPCVLFFDELDSIAKARGGSVGDAGGAADRVINQVLTEMDGMNAKKNVFIIGATNRPDIIDPAVLRPGRLDQLIYIPLPDEASRLQIFKASLRKTPLSADLDLNFLAKNTVGFSGADLTEICQRACKLAIRESIEREIRQEKERQDRSARGEELMEDELADPVPEITRAHFEEAMKFARRSVTDNDIRKYEMFAQTLQQSRGFGNNFKFPGEAPSAGQPVGGNGGSGGNDDDDLYN.

ATP-binding positions include 252-258 (PGTGKTL), N353, H389, and 526-531 (GCGKTL). Positions 713-727 (RQEKERQDRSARGEE) are enriched in basic and acidic residues. 2 disordered regions span residues 713-732 (RQEKERQDRSARGEELMEDE) and 777-810 (FGNNFKFPGEAPSAGQPVGGNGGSGGNDDDDLYN). A compositionally biased stretch (gly residues) spans 793–802 (PVGGNGGSGG). The tract at residues 805 to 810 (DDDLYN) is interaction with ufd-2.

This sequence belongs to the AAA ATPase family. CDC48 subfamily. In terms of assembly, homohexamer; oligomerization is ATP-independent. Forms a ring-shaped particle of 18.3 nm diameter, that displays 6-fold radial symmetry. Interacts with cdc-48.1 and thus may form heterohexamers. Forms a complex composed of ubxn-3, cdc-48.1 and/or cdc-48.2 and substrate cdt-1. Interacts (via N-terminus) with ubxn-3. Interacts (via N-terminus) with atx-3 (via RRDR motif). Interacts (via N-terminus) with ubxn-5. Interacts with ufd-1. Interacts (via DDDLYN motif) with ufd-2. Interacts (via N-terminus) with ubxn-1. Interacts (via N-terminus) with ubxn-2. Interacts (via N-terminus) with ubxn-4. Interacts with ubxn-6. As to expression, expressed in body wall muscles.

It localises to the cytoplasm. The catalysed reaction is ATP + H2O = ADP + phosphate + H(+). With respect to regulation, the first ATP-binding region has low ATPase activity. The second ATP-binding region is responsible for ATPase activity. ATP binding to the first ATP-binding region induces intrinsic activity of the second ATP-binding region. While ATP binding to the first ATP-binding region appears to prevent ATP hydrolysis by the second ATP-binding region, ADP-binding to first region promotes the coordinate and cooperative ATPase cycle of the second ATP-binding region. ATP binding to the first ATP-binding region induces a conformational change, promoting the rotation of the first ATP-binding region relative to the second ATP-binding region in the hexamer. Inhibited by N-ethylmaleimide (NEM). In terms of biological role, ATP-dependent chaperone which probably uses the energy provided by ATP hydrolysis to generate mechanical force to unfold substrate proteins, disassemble protein complexes, and disaggregate protein aggregates. However, able to prevent aggregation of unfolded proteins also in an ATP-independent manner. Targets polyubiquitinated proteins for proteasomal degradation by binding to 'Lys-48'-linked polyubiquitin chains. Involved in the cytoplasmic elimination of misfolded proteins exported from the ER. This pathway, known as ERAD, prevents the activation of the unfolded protein response (UPR) caused by the accumulation of misfolded proteins in the ER. Together with udf-2 and chn-1, regulates myosin assembly in body wall muscles by targeting myosin chaperone unc-45 for proteasomal degradation. During oocyte meiosis and together with cdc-48.1, required for chromosome condensation at the diakinesis phase in prophase I and for progression of metaphase I. During the first embryonic cell division, regulates DNA replication and thus chromosome segregation and decondensation, and nuclear envelope re-assembly. In S phase and in association with ufd-1, npl-4.1 and/or npl-4.2 and ubxn-3, ensures the degradation of DNA licensing factor cdt-1 after the initiation of DNA replication and thus the disassembly of the DNA replication CMG helicase complex by promoting the dissociation from chromatin of several of its components including cdc-45 and sld-5. Regulates ubxn-3 nuclear localization during S phase. During the first embryonic cell divisions and together with cdc-48.1, regulates the re-assembly of the nuclear envelope after mitosis possibly by inactivating kinase air-2, a component of the chromosomal passenger complex (CPC). The chain is Transitional endoplasmic reticulum ATPase homolog 2 (cdc-48.2) from Caenorhabditis elegans.